A 518-amino-acid chain; its full sequence is Membrane-bound lytic murein transglycosylase F (518 aa).

The N-terminal stretch at 1 to 21 (MKKLKINYLFIGILALLLAVA) is a signal peptide. Positions 22-269 (LWPSIPWFGK…RIEEKYLGHG (248 aa)) are non-LT domain. The tract at residues 270 to 518 (DDFDYVDTRT…SRKGSEEKQN (249 aa)) is LT domain. The active site involves Glu314.

This sequence in the N-terminal section; belongs to the bacterial solute-binding protein 3 family. In the C-terminal section; belongs to the transglycosylase Slt family.

The protein localises to the cell outer membrane. The catalysed reaction is Exolytic cleavage of the (1-&gt;4)-beta-glycosidic linkage between N-acetylmuramic acid (MurNAc) and N-acetylglucosamine (GlcNAc) residues in peptidoglycan, from either the reducing or the non-reducing ends of the peptidoglycan chains, with concomitant formation of a 1,6-anhydrobond in the MurNAc residue.. Its function is as follows. Murein-degrading enzyme that degrades murein glycan strands and insoluble, high-molecular weight murein sacculi, with the concomitant formation of a 1,6-anhydromuramoyl product. Lytic transglycosylases (LTs) play an integral role in the metabolism of the peptidoglycan (PG) sacculus. Their lytic action creates space within the PG sacculus to allow for its expansion as well as for the insertion of various structures such as secretion systems and flagella. This chain is Membrane-bound lytic murein transglycosylase F, found in Escherichia coli O6:K15:H31 (strain 536 / UPEC).